Here is a 472-residue protein sequence, read N- to C-terminus: Argininosuccinate lyase (472 aa).

Belongs to the lyase 1 family. Argininosuccinate lyase subfamily.

The protein resides in the cytoplasm. It carries out the reaction 2-(N(omega)-L-arginino)succinate = fumarate + L-arginine. It functions in the pathway amino-acid biosynthesis; L-arginine biosynthesis; L-arginine from L-ornithine and carbamoyl phosphate: step 3/3. The chain is Argininosuccinate lyase from Synechococcus sp. (strain CC9311).